The following is a 254-amino-acid chain: 3-deoxy-manno-octulosonate cytidylyltransferase (254 aa).

It belongs to the KdsB family.

The protein resides in the cytoplasm. It carries out the reaction 3-deoxy-alpha-D-manno-oct-2-ulosonate + CTP = CMP-3-deoxy-beta-D-manno-octulosonate + diphosphate. It functions in the pathway nucleotide-sugar biosynthesis; CMP-3-deoxy-D-manno-octulosonate biosynthesis; CMP-3-deoxy-D-manno-octulosonate from 3-deoxy-D-manno-octulosonate and CTP: step 1/1. It participates in bacterial outer membrane biogenesis; lipopolysaccharide biosynthesis. Functionally, activates KDO (a required 8-carbon sugar) for incorporation into bacterial lipopolysaccharide in Gram-negative bacteria. The sequence is that of 3-deoxy-manno-octulosonate cytidylyltransferase from Polynucleobacter asymbioticus (strain DSM 18221 / CIP 109841 / QLW-P1DMWA-1) (Polynucleobacter necessarius subsp. asymbioticus).